Consider the following 376-residue polypeptide: Branched-chain-amino-acid aminotransferase, cytosolic (376 aa).

Lys202 is modified (N6-(pyridoxal phosphate)lysine).

It belongs to the class-IV pyridoxal-phosphate-dependent aminotransferase family. It depends on pyridoxal 5'-phosphate as a cofactor.

It localises to the cytoplasm. It catalyses the reaction L-leucine + 2-oxoglutarate = 4-methyl-2-oxopentanoate + L-glutamate. The catalysed reaction is L-isoleucine + 2-oxoglutarate = (S)-3-methyl-2-oxopentanoate + L-glutamate. It carries out the reaction L-valine + 2-oxoglutarate = 3-methyl-2-oxobutanoate + L-glutamate. The enzyme catalyses a 2-oxocarboxylate + L-methionine = 4-methylsulfanyl-2-oxobutanoate + an L-alpha-amino acid. It functions in the pathway amino-acid biosynthesis; L-isoleucine biosynthesis; L-isoleucine from 2-oxobutanoate: step 4/4. Its pathway is amino-acid biosynthesis; L-leucine biosynthesis; L-leucine from 3-methyl-2-oxobutanoate: step 4/4. It participates in amino-acid biosynthesis; L-valine biosynthesis; L-valine from pyruvate: step 4/4. The protein operates within amino-acid biosynthesis; L-methionine biosynthesis via salvage pathway; L-methionine from S-methyl-5-thio-alpha-D-ribose 1-phosphate: step 6/6. Functionally, cytoplasmic isozyme of branched-chain-amino-acid aminotransferase, which catalyzes the first reaction in the catabolism of the essential branched chain amino acids (BCAAs) leucine, isoleucine, and valine. Catalyzes the formation of methionine from 2-keto-4-methylthiobutyrate (KMTB) in the methionine salvage pathway primarily using BCAAs (leucine, isoleucine, and valine) as well as lysine and proline as the amino donors. Involved in cell cycle regulation. The chain is Branched-chain-amino-acid aminotransferase, cytosolic from Saccharomyces cerevisiae (strain ATCC 204508 / S288c) (Baker's yeast).